Reading from the N-terminus, the 308-residue chain is D-alanine--D-alanine ligase B (308 aa).

The ATP-grasp domain occupies 102 to 302 (KKVAAAAGVV…FAELLSWMVE (201 aa)). An ATP-binding site is contributed by 128–183 (PMKPPYVVKPVREGSSFGVVIVKEDQPHPPQVIGSADWKYGDEVMVEGYIAGRELT). The Mg(2+) site is built by Asp-252, Glu-269, and Asn-271.

This sequence belongs to the D-alanine--D-alanine ligase family. Requires Mg(2+) as cofactor. The cofactor is Mn(2+).

It is found in the cytoplasm. It catalyses the reaction 2 D-alanine + ATP = D-alanyl-D-alanine + ADP + phosphate + H(+). The protein operates within cell wall biogenesis; peptidoglycan biosynthesis. Cell wall formation. This chain is D-alanine--D-alanine ligase B, found in Brucella suis biovar 1 (strain 1330).